The following is a 461-amino-acid chain: Cysteine--tRNA ligase (461 aa).

C28 contributes to the Zn(2+) binding site. The short motif at 30 to 40 (ITVYDLCHIGH) is the 'HIGH' region element. Residues C209, H234, and E238 each contribute to the Zn(2+) site. Residues 266–270 (KMSKS) carry the 'KMSKS' region motif. An ATP-binding site is contributed by K269.

Belongs to the class-I aminoacyl-tRNA synthetase family. Monomer. The cofactor is Zn(2+).

It is found in the cytoplasm. It carries out the reaction tRNA(Cys) + L-cysteine + ATP = L-cysteinyl-tRNA(Cys) + AMP + diphosphate. The protein is Cysteine--tRNA ligase of Escherichia coli O157:H7.